The following is a 294-amino-acid chain: MRIRFTKMQGAGNDFVVLDETRGTLGLTAAQYRFLADRHFGVGADQILTVRPPSKGAAEGVDFQYVIHNADGGEVEQCGNGARCFMRFVREHHLTDKDTVRVETLAGIIEPRMGADGRVTVDMGPPIFEPARVPFDTAGLDPQPTGSWHTWHLALGTHADSAIVSVAVLSMGNPHAVQVVDNVDTAPVARQGPLIEHHPRFAQRVNAGFMQVVDRSHIKLRVFERGAGETLACGTGACAAVVAGIRLGLLERRVDVQTHGGVLTIGWEGEGHPVLMTGPATTVFEGDIEVPELP.

Residues N13, Q46, and N69 each coordinate substrate. The active-site Proton donor is the C78. Substrate contacts are provided by residues 79–80 (GN), N173, N206, and 224–225 (ER). The active-site Proton acceptor is C233. Position 234–235 (234–235 (GT)) interacts with substrate.

The protein belongs to the diaminopimelate epimerase family. Homodimer.

Its subcellular location is the cytoplasm. It catalyses the reaction (2S,6S)-2,6-diaminopimelate = meso-2,6-diaminopimelate. Its pathway is amino-acid biosynthesis; L-lysine biosynthesis via DAP pathway; DL-2,6-diaminopimelate from LL-2,6-diaminopimelate: step 1/1. Functionally, catalyzes the stereoinversion of LL-2,6-diaminopimelate (L,L-DAP) to meso-diaminopimelate (meso-DAP), a precursor of L-lysine and an essential component of the bacterial peptidoglycan. The polypeptide is Diaminopimelate epimerase (Variovorax paradoxus (strain S110)).